Here is a 283-residue protein sequence, read N- to C-terminus: Pyridoxal kinase PdxY (283 aa).

Residue S8 participates in substrate binding. Positions 110 and 147 each coordinate ATP. D219 contributes to the substrate binding site.

Belongs to the pyridoxine kinase family. PdxY subfamily. As to quaternary structure, homodimer. Mg(2+) is required as a cofactor.

It catalyses the reaction pyridoxal + ATP = pyridoxal 5'-phosphate + ADP + H(+). It participates in cofactor metabolism; pyridoxal 5'-phosphate salvage; pyridoxal 5'-phosphate from pyridoxal: step 1/1. Its function is as follows. Pyridoxal kinase involved in the salvage pathway of pyridoxal 5'-phosphate (PLP). Catalyzes the phosphorylation of pyridoxal to PLP. This is Pyridoxal kinase PdxY from Leifsonia xyli subsp. xyli (strain CTCB07).